The sequence spans 678 residues: THO complex subunit 5 homolog B (678 aa).

2 disordered regions span residues 1–37 and 294–329; these read MSSDSLKKRKPKVNRSEDGKRGRHDEQEGRYYSEEAE and ALFKPPEDSQDDESDSDAEEEQTTKRRRPTLGVQLD. The Nuclear localization signal motif lies at 7 to 10; sequence KKRK. Positions 14–37 are enriched in basic and acidic residues; that stretch reads NRSEDGKRGRHDEQEGRYYSEEAE. Acidic residues predominate over residues 301–314; the sequence is DSQDDESDSDAEEE.

The protein belongs to the THOC5 family. Component of the THO subcomplex, which is composed of thoc1, thoc2, thoc3, thoc5, thoc6 and thoc7. Component of the transcription/export (TREX) complex at least composed of alyref/thoc4, ddx39b, sarnp/cip29, chtop and the THO subcomplex. Interacts with thoc7.

The protein localises to the nucleus. The protein resides in the nucleus speckle. It is found in the cytoplasm. Functionally, component of the THO subcomplex of the TREX complex which is thought to couple mRNA transcription, processing and nuclear export, and which specifically associates with spliced mRNA and not with unspliced pre-mRNA. Plays a key structural role in the oligomerization of the THO-ddx39b complex. TREX is recruited to spliced mRNAs by a transcription-independent mechanism, binds to mRNA upstream of the exon-junction complex (EJC) and is recruited in a splicing- and cap-dependent manner to a region near the 5' end of the mRNA where it functions in mRNA export to the cytoplasm via the TAP/NXF1 pathway. May be involved in cell differentiation. The protein is THO complex subunit 5 homolog B (thoc5-b) of Xenopus laevis (African clawed frog).